The following is a 634-amino-acid chain: 1-deoxy-D-xylulose-5-phosphate synthase (634 aa).

Thiamine diphosphate contacts are provided by residues histidine 72 and 113 to 115 (GHS). A Mg(2+)-binding site is contributed by aspartate 144. Thiamine diphosphate contacts are provided by residues 145–146 (GA), asparagine 173, tyrosine 284, and glutamate 367. Position 173 (asparagine 173) interacts with Mg(2+).

This sequence belongs to the transketolase family. DXPS subfamily. In terms of assembly, homodimer. Requires Mg(2+) as cofactor. Thiamine diphosphate is required as a cofactor.

The enzyme catalyses D-glyceraldehyde 3-phosphate + pyruvate + H(+) = 1-deoxy-D-xylulose 5-phosphate + CO2. The protein operates within metabolic intermediate biosynthesis; 1-deoxy-D-xylulose 5-phosphate biosynthesis; 1-deoxy-D-xylulose 5-phosphate from D-glyceraldehyde 3-phosphate and pyruvate: step 1/1. In terms of biological role, catalyzes the acyloin condensation reaction between C atoms 2 and 3 of pyruvate and glyceraldehyde 3-phosphate to yield 1-deoxy-D-xylulose-5-phosphate (DXP). The protein is 1-deoxy-D-xylulose-5-phosphate synthase of Listeria welshimeri serovar 6b (strain ATCC 35897 / DSM 20650 / CCUG 15529 / CIP 8149 / NCTC 11857 / SLCC 5334 / V8).